A 493-amino-acid polypeptide reads, in one-letter code: Probable protein phosphatase 2C 40 (493 aa).

The PPM-type phosphatase domain occupies Leu145–Leu480. Residues Asp180, Gly181, Asp408, and Asp471 each contribute to the Mn(2+) site.

This sequence belongs to the PP2C family. The cofactor is Mg(2+). It depends on Mn(2+) as a cofactor.

The enzyme catalyses O-phospho-L-seryl-[protein] + H2O = L-seryl-[protein] + phosphate. It catalyses the reaction O-phospho-L-threonyl-[protein] + H2O = L-threonyl-[protein] + phosphate. The polypeptide is Probable protein phosphatase 2C 40 (Arabidopsis thaliana (Mouse-ear cress)).